The primary structure comprises 109 residues: Polyprenyl transferase subC (109 aa).

2 helical membrane passes run 39-59 (LFCV…NDWI) and 84-104 (QAFV…HVML).

Belongs to the UbiA prenyltransferase family. It depends on Mg(2+) as a cofactor.

The protein localises to the membrane. The protein operates within secondary metabolite biosynthesis; terpenoid biosynthesis. Functionally, polyprenyl transferase; part of the gene cluster that mediates the biosynthesis of the immunosuppressants subglutinols, meroterpenoids consisting of an alpha-pyrone (4-hydroxy-5,6-dimethyl-2-pyrone) moiety attached to a decalin core fused to a five-membered cyclic ether carrying a prenylside chain. The first step of the pathway is the synthesis of the alpha-pyrone moiety by the polyketide synthase subA via condensation of one acetyl-CoA starter unit with 3 malonyl-CoA units and 2 methylations. The alpha-pyrone is then combined with geranylgeranyl pyrophosphate (GGPP) formed by the GGPP synthase subD through the action of the prenyltransferase subC to yield a linear alpha-pyrone diterpenoid. Subsequent steps in the subglutinol biosynthetic pathway involve the decalin core formation, which is thought to be initiated by the epoxidation of the C10-C11 olefin by the FAD-dependent oxidoreductase subE. The following cyclization cascade would be catalyzed by the terpene cyclase subB. Lastly, the FAD-dependent dehydrogenase subF probably catalyzes the five-membered cyclic ether formation to complete the formation of subglutinol A. Subsequent redox reactions appear to give rise to subglutinol C and D, however, it remains unclear which enzymes are responsible for these transformations. SubD may have secondary function in the conversion of the identified subglutinols to subglutinol analog 45, which seems to be the major product of the cluster. The polypeptide is Polyprenyl transferase subC (Metarhizium robertsii (strain ARSEF 23 / ATCC MYA-3075) (Metarhizium anisopliae (strain ARSEF 23))).